The chain runs to 1288 residues: MGSPEGRFHFAIDRGGTFTDVFAQCPGGHVRVLKLLSEDPANYADAPTEGIRRILEQEEGVLLPRGRPLDTSRIASIRMGTTVATNALLERQGERVALLVTRGFRDLLHIGTQARPDLFDLAVPMPEVLYEEVLEVDERVVLYRGEPGAGSPVKGRTGDLLEIQQPVDLEALRGKLEGLLSRGIHSLAVVLMHSYTWAQHEQQVGTLARELGFTHVSLSSEVMPMVRIVPRGHTACADAYLTPTIQRYVQGFRRGFQGQLKNVQVLFMRSDGGLAPMDAFSGSRAVLSGPAGGVVGYSATTYHLEGGQPVIGFDMGGTSTDVSRYAGEFEHVFEASTAGVTLQAPQLDINTVAAGGGSRLFFRSGLFVVGPESAGAHPGPACYRKGGPVTVTDANLVLGRLLPASFPCIFGPGEDQPLSPEASRKALEAVAMEVNSFLTNGPCPASQLSLEEVAMGFVRVANEAMCRPIRALTQARGHDPSAHVLACFGGAGGQHACAIARALGMDTVHIHRHSGLLSALGLALADVVHEAQEPCSLSYTPETFAQLDQRLSRLEEQCVDALQVQGFPRSQISTESFLHLRYQGTDCALMVSAHQHPATACSPRAGDFGAAFVERYMREFGFIIPERPVVVDDVRVRGTGRSGLQLEDTPKIQTGPPHVEKVTQCYFEGGYQETPVYLLGELGYGHQLQGPCLIIDNNSTILVEPGCQAEVTDTGDIRISVGAEGPSMADTRLDPIQLSIFSHRFMSIAEQMGRILQRTAISTNIKERLDFSCALFGPDGGLVSNAPHIPVHLGAMQETVQFQIQHLGADLHPGDVLLSNHPSAGGSHLPDLTVITPVFWPGQTRPVFYVASRGHHADIGGITPGSMPPHSTTLQQEGAVFLSFKLVQGGVFQEEAVTEALRAPGKISGCSGTRNLHDNLSDLRAQVAANQKGIQLVGELIGQYGLDVVQAYMGHIQANAELAVRDMLRAFGTSRQARGLPLEVSAEDHMDDGSPICLRVQINLSQGSAVFDFTGSGSEVFGNLNAPRAITLSALIYCLRCLVGRDIPLNQGCLAPVRVIIPKGSILDPSPEAAVVGGNVLTSQRVVDVILGAFGACSASQGCMNNVTLGNARMGYYETVAGGAGAGPGWHGRSGVHSHMTNTRITDPEILESRYPVILRRFELRPGSGGRGRFRGGDGVVRELVFREEALLSVLTERRAFQPYGLHGGEPGARGLNLLIRKDGRTVNLGGKTSVTVYPGDVFCLHTPGGGGYGDPEDPAPPPGSPPLFPAFPERGSVFEYRRAQEAV.

The interval 1248–1270 is disordered; that stretch reads PGGGGYGDPEDPAPPPGSPPLFP. Over residues 1259–1270 the composition is skewed to pro residues; the sequence is PAPPPGSPPLFP. The residue at position 1265 (Ser-1265) is a Phosphoserine.

Belongs to the oxoprolinase family. Homodimer. As to expression, expressed in testis, kidney and liver.

The protein localises to the cytoplasm. Its subcellular location is the cytosol. It catalyses the reaction 5-oxo-L-proline + ATP + 2 H2O = L-glutamate + ADP + phosphate + H(+). Functionally, catalyzes the cleavage of 5-oxo-L-proline to form L-glutamate coupled to the hydrolysis of ATP to ADP and inorganic phosphate. In Rattus norvegicus (Rat), this protein is 5-oxoprolinase (Oplah).